The primary structure comprises 70 residues: U2-agatoxin-Ao1l (70 aa).

The N-terminal stretch at 1–20 (MRAIISLLLISAMVFSIIEA) is a signal peptide. Residues 21–34 (VPEEEGLQLSEDER) constitute a propeptide that is removed on maturation. Disulfide bonds link Cys-37-Cys-53, Cys-44-Cys-58, and Cys-52-Cys-68. Leucine amide is present on Leu-69.

The protein belongs to the neurotoxin 01 (U2-agtx) family. In terms of tissue distribution, expressed by the venom gland.

It localises to the secreted. In terms of biological role, insect active toxin causing rapid but reversible paralysis in crickets. No activity shown in mammals. Does not show effect on mammalian voltage-gated calcium channels. This is U2-agatoxin-Ao1l from Agelena orientalis (Funnel-web spider).